The chain runs to 177 residues: Small ribosomal subunit protein uS5 (177 aa).

An S5 DRBM domain is found at 21–84 (LLDRVVKIKR…KQASRSMIHV (64 aa)).

Belongs to the universal ribosomal protein uS5 family. As to quaternary structure, part of the 30S ribosomal subunit. Contacts proteins S4 and S8.

Functionally, with S4 and S12 plays an important role in translational accuracy. In terms of biological role, located at the back of the 30S subunit body where it stabilizes the conformation of the head with respect to the body. This is Small ribosomal subunit protein uS5 from Rhodopirellula baltica (strain DSM 10527 / NCIMB 13988 / SH1).